Consider the following 479-residue polypeptide: Probable cytosol aminopeptidase (479 aa).

2 residues coordinate Mn(2+): Lys247 and Asp252. Residue Lys259 is part of the active site. The Mn(2+) site is built by Asp270, Asp329, and Glu331. Arg333 is a catalytic residue.

This sequence belongs to the peptidase M17 family. Mn(2+) serves as cofactor.

The protein localises to the cytoplasm. The catalysed reaction is Release of an N-terminal amino acid, Xaa-|-Yaa-, in which Xaa is preferably Leu, but may be other amino acids including Pro although not Arg or Lys, and Yaa may be Pro. Amino acid amides and methyl esters are also readily hydrolyzed, but rates on arylamides are exceedingly low.. It catalyses the reaction Release of an N-terminal amino acid, preferentially leucine, but not glutamic or aspartic acids.. Presumably involved in the processing and regular turnover of intracellular proteins. Catalyzes the removal of unsubstituted N-terminal amino acids from various peptides. The chain is Probable cytosol aminopeptidase from Vesicomyosocius okutanii subsp. Calyptogena okutanii (strain HA).